A 137-amino-acid chain; its full sequence is MPTINQLVRKGRRSQSSKSKAPALNYGYNSMKKSQVNNPAPQKRGVATRVGTMTPKKPNSALRKYARVRLSNLIEVTAYIPGIGHNLQEHSVVLIRGGRVKDLPGVRYHVIRGALDTAGVTDRKQSRSKYGTKKPKK.

The interval 1-24 (MPTINQLVRKGRRSQSSKSKAPAL) is disordered. 3-methylthioaspartic acid is present on D102.

This sequence belongs to the universal ribosomal protein uS12 family. As to quaternary structure, part of the 30S ribosomal subunit. Contacts proteins S8 and S17. May interact with IF1 in the 30S initiation complex.

In terms of biological role, with S4 and S5 plays an important role in translational accuracy. Its function is as follows. Interacts with and stabilizes bases of the 16S rRNA that are involved in tRNA selection in the A site and with the mRNA backbone. Located at the interface of the 30S and 50S subunits, it traverses the body of the 30S subunit contacting proteins on the other side and probably holding the rRNA structure together. The combined cluster of proteins S8, S12 and S17 appears to hold together the shoulder and platform of the 30S subunit. The polypeptide is Small ribosomal subunit protein uS12 (Pediococcus pentosaceus (strain ATCC 25745 / CCUG 21536 / LMG 10740 / 183-1w)).